The sequence spans 543 residues: Excitatory amino acid transporter 1 (543 aa).

Topologically, residues 1 to 47 (MTKSNGEEPRMGSRMERFQQGVRKRTLLAKKKVQNITKEDVKSYLFR) are cytoplasmic. Residues 48 to 68 (NAFVLLTVSAVIVGTILGFAL) traverse the membrane as a helical segment. Topologically, residues 69 to 86 (RPYKMSYREVKYFSFPGE) are extracellular. The chain crosses the membrane as a helical span at residues 87–108 (LLMRMLQMLVLPLIISSLVTGM). Over 109 to 122 (AALDSKASGKMGMR) the chain is Cytoplasmic. A helical transmembrane segment spans residues 123–145 (AVVYYMTTTIIAVVIGIIIVIII). Residues 146–236 (HPGKGTKENM…IREEMVPVPG (91 aa)) lie on the Extracellular side of the membrane. The helical transmembrane segment at 237–260 (SVNGVNALGLVVFSMCFGFVIGNM) threads the bilayer. Over 261–269 (KEQGQALRE) the chain is Cytoplasmic. A helical membrane pass occupies residues 270-297 (FFDSLNEAIMRLVAVIMWYAPLGILFLI). Residues 298–318 (AGKILEMEDMGVIGGQLAMYT) lie on the Extracellular side of the membrane. A helical transmembrane segment spans residues 319–340 (VTVIVGLLIHAVIVLPLLYFLV). The Cytoplasmic portion of the chain corresponds to 341–345 (TRKNP). The discontinuously helical intramembrane region spans 346–376 (WVFIGGLLQALITALGTSSSSATLPITFKCL). Position 363-365 (363-365 (SSS)) interacts with L-aspartate. Residues 377–385 (EENNGVDKR) are Cytoplasmic-facing. The chain crosses the membrane as a helical span at residues 386-412 (ITRFVLPVGATINMDGTALYEALAAIF). Glycine 394, threonine 396, and asparagine 398 together coordinate Na(+). Residue threonine 402 coordinates L-aspartate. Over 413–425 (IAQVNNFDLNFGQ) the chain is Extracellular. An intramembrane region (discontinuously helical) is located at residues 426-459 (IITISITATAASIGAAGIPQAGLVTMVIVLTSVG). L-aspartate is bound at residue 443 to 447 (IPQAG). Residues 460–472 (LPTDDITLIIAVD) lie on the Extracellular side of the membrane. A helical transmembrane segment spans residues 473–494 (WFLDRLRTTTNVLGDSLGAGIV). Residues aspartate 476 and asparagine 483 each contribute to the L-aspartate site. Residues asparagine 483 and aspartate 487 each coordinate Na(+). Residues 495-543 (EHLSRHELKNRDVEMGNSVIEENEMKKPYQLIAQDNEPEKPVADSETKM) lie on the Cytoplasmic side of the membrane. The residue at position 512 (serine 512) is a Phosphoserine. Positions 522–543 (PYQLIAQDNEPEKPVADSETKM) are disordered. Basic and acidic residues predominate over residues 531-543 (EPEKPVADSETKM).

The protein belongs to the dicarboxylate/amino acid:cation symporter (DAACS) (TC 2.A.23) family. SLC1A3 subfamily. As to quaternary structure, homotrimer. Glycosylated. In terms of tissue distribution, detected in brain and cerebellum. Both isoform GLAST-1 and GLAST-1A are expressed in bone and brain. In brain isoform GLAST-1 is highly enriched in the Purkinje cell layer in cerebellum.

The protein resides in the cell membrane. The enzyme catalyses K(+)(in) + L-glutamate(out) + 3 Na(+)(out) + H(+)(out) = K(+)(out) + L-glutamate(in) + 3 Na(+)(in) + H(+)(in). It carries out the reaction K(+)(in) + L-aspartate(out) + 3 Na(+)(out) + H(+)(out) = K(+)(out) + L-aspartate(in) + 3 Na(+)(in) + H(+)(in). It catalyses the reaction D-aspartate(out) + K(+)(in) + 3 Na(+)(out) + H(+)(out) = D-aspartate(in) + K(+)(out) + 3 Na(+)(in) + H(+)(in). Its function is as follows. Sodium-dependent, high-affinity amino acid transporter that mediates the uptake of L-glutamate and also L-aspartate and D-aspartate. Functions as a symporter that transports one amino acid molecule together with two or three Na(+) ions and one proton, in parallel with the counter-transport of one K(+) ion. Plays a redundant role in the rapid removal of released glutamate from the synaptic cleft, which is essential for terminating the postsynaptic action of glutamate. In Rattus norvegicus (Rat), this protein is Excitatory amino acid transporter 1 (Slc1a3).